The sequence spans 350 residues: Pro-cathepsin H (350 aa).

An N-terminal signal peptide occupies residues 1–19; the sequence is MAQWTLLIVFFCVATAAAG. A propeptide spans 20-113 (activation peptide); it reads LSFHDSNPIR…WEEFRSHRLG (94 aa). Asn117 is a glycosylation site (N-linked (GlcNAc...) asparagine). Positions 122–132 are cleaved as a propeptide — removed in mature form; the sequence is LKGNHRITDVV. 2 cysteine pairs are disulfide-bonded: Cys154–Cys197 and Cys188–Cys230. Cys157 is an active-site residue. Residue Asn177 is glycosylated (N-linked (GlcNAc...) asparagine). An N-linked (GlcNAc...) asparagine glycan is attached at Asn246. Cysteines 288 and 338 form a disulfide. Residues His297 and Asn317 contribute to the active site.

The protein belongs to the peptidase C1 family. As to quaternary structure, interacts with KPI104 and KPI106. Composed of a mini chain and a large chain. The large chain may be split into heavy and light chain. All chains are held together by disulfide bonds.

It is found in the vacuole. Its subcellular location is the lysosome. The enzyme catalyses Hydrolysis of proteins, acting as an aminopeptidase (notably, cleaving Arg-|-Xaa bonds) as well as an endopeptidase.. Its function is as follows. May play a role in proteolysis leading to mobilization of nitrogen during senescence and starvation. This Medicago truncatula (Barrel medic) protein is Pro-cathepsin H.